A 61-amino-acid polypeptide reads, in one-letter code: UPF0434 protein Pput_3813 (61 aa).

It belongs to the UPF0434 family.

This is UPF0434 protein Pput_3813 from Pseudomonas putida (strain ATCC 700007 / DSM 6899 / JCM 31910 / BCRC 17059 / LMG 24140 / F1).